The chain runs to 301 residues: Protoheme IX farnesyltransferase (301 aa).

The next 8 membrane-spanning stretches (helical) occupy residues 30–50 (VISL…PKAI), 55–75 (IIVS…GGMI), 106–126 (AYAI…LANP), 127–147 (LTAL…SIWL), 152–172 (WWNI…GFAA), 177–197 (FTLL…GHFW), 233–253 (ALMV…YLIV), and 281–301 (FKLS…VKLI).

This sequence belongs to the UbiA prenyltransferase family. Protoheme IX farnesyltransferase subfamily.

It is found in the cell membrane. It carries out the reaction heme b + (2E,6E)-farnesyl diphosphate + H2O = Fe(II)-heme o + diphosphate. The protein operates within porphyrin-containing compound metabolism; heme O biosynthesis; heme O from protoheme: step 1/1. Converts heme B (protoheme IX) to heme O by substitution of the vinyl group on carbon 2 of heme B porphyrin ring with a hydroxyethyl farnesyl side group. This chain is Protoheme IX farnesyltransferase, found in Sulfurisphaera tokodaii (strain DSM 16993 / JCM 10545 / NBRC 100140 / 7) (Sulfolobus tokodaii).